A 103-amino-acid chain; its full sequence is MSGRGKGGKGLGKGGAKRHRRVLRDNIQGITKPAIRRLARRGGVKRISGLIYEETRGVLKVFLENVIRDAVTYTEHARRKTVTAMDVVYALKRQGRTLYGFGG.

Residues 1-14 (MSGRGKGGKGLGKG) show a composition bias toward gly residues. The segment at 1–20 (MSGRGKGGKGLGKGGAKRHR) is disordered. Ser-2 bears the N-acetylserine mark. The residue at position 17 (Lys-17) is an N6-acetyllysine. The DNA-binding element occupies 17–21 (KRHRR). The residue at position 80 (Lys-80) is an N6-methylated lysine.

The protein belongs to the histone H4 family. As to quaternary structure, the nucleosome is a histone octamer containing two molecules each of H2A, H2B, H3 and H4 assembled in one H3-H4 heterotetramer and two H2A-H2B heterodimers. The octamer wraps approximately 147 bp of DNA.

It localises to the nucleus. The protein localises to the chromosome. Functionally, core component of nucleosome. Nucleosomes wrap and compact DNA into chromatin, limiting DNA accessibility to the cellular machineries which require DNA as a template. Histones thereby play a central role in transcription regulation, DNA repair, DNA replication and chromosomal stability. DNA accessibility is regulated via a complex set of post-translational modifications of histones, also called histone code, and nucleosome remodeling. The protein is Histone H4 of Olisthodiscus luteus (Marine phytoflagellate).